We begin with the raw amino-acid sequence, 300 residues long: PAK4-inhibitor INKA2 (300 aa).

Disordered regions lie at residues 59–104 (GGTP…SSPK), 178–201 (LEKGGEKGETGGSIEPKGEKGQSR), and 230–288 (KEKP…LEPS). The segment covering 60–73 (GTPTFSCPESSQEQ) has biased composition (polar residues). Low complexity predominate over residues 93–102 (SSSQPSFDSS). The segment at 140–183 (EPDDWTSTLMSRGRNRQPLVLGDNVFADLVGNWLDLPELEKGGE) is inka box. The span at 246-256 (GRSKKVKKRSL) shows a compositional bias: basic residues.

This sequence belongs to the INKA family. Interacts with PAK4. Enriched in the nervous system.

It localises to the nucleus. Functionally, inhibitor of the serine/threonine-protein kinase PAK4. Acts by binding PAK4 in a substrate-like manner, inhibiting the protein kinase activity. The chain is PAK4-inhibitor INKA2 from Mus musculus (Mouse).